A 702-amino-acid polypeptide reads, in one-letter code: uncharacterized protein (702 aa).

5 stretches are compositionally biased toward low complexity: residues 306 to 384 (NNNN…NNNN), 488 to 511 (PTKT…TNIT), 559 to 590 (QQSQ…NNNN), 603 to 612 (SNQNSNNNNQ), and 621 to 639 (NNNN…NNNN). 3 disordered regions span residues 306 to 385 (NNNN…NNNE), 488 to 513 (PTKT…ITYG), and 551 to 645 (STMN…NSRY). Residues 337–489 (NNINNNINNN…IKSLDILSPT (153 aa)) enclose the VPS9 domain.

This is an uncharacterized protein from Dictyostelium discoideum (Social amoeba).